The sequence spans 369 residues: Peptide chain release factor 2 (369 aa).

At Q250 the chain carries N5-methylglutamine.

Belongs to the prokaryotic/mitochondrial release factor family. Post-translationally, methylated by PrmC. Methylation increases the termination efficiency of RF2.

It localises to the cytoplasm. Functionally, peptide chain release factor 2 directs the termination of translation in response to the peptide chain termination codons UGA and UAA. This Rickettsia typhi (strain ATCC VR-144 / Wilmington) protein is Peptide chain release factor 2 (prfB).